The primary structure comprises 471 residues: Ribulose bisphosphate carboxylase large chain (471 aa).

Positions 115 and 165 each coordinate substrate. The active-site Proton acceptor is the lysine 167. Lysine 169 contacts substrate. Residues lysine 193, aspartate 195, and glutamate 196 each coordinate Mg(2+). Lysine 193 carries the N6-carboxylysine modification. Histidine 286 serves as the catalytic Proton acceptor. Residues arginine 287, histidine 319, and serine 371 each contribute to the substrate site.

This sequence belongs to the RuBisCO large chain family. Type I subfamily. In terms of assembly, heterohexadecamer of 8 large chains and 8 small chains. Mg(2+) is required as a cofactor.

The protein localises to the carboxysome. The enzyme catalyses 2 (2R)-3-phosphoglycerate + 2 H(+) = D-ribulose 1,5-bisphosphate + CO2 + H2O. It catalyses the reaction D-ribulose 1,5-bisphosphate + O2 = 2-phosphoglycolate + (2R)-3-phosphoglycerate + 2 H(+). Functionally, ruBisCO catalyzes two reactions: the carboxylation of D-ribulose 1,5-bisphosphate, the primary event in carbon dioxide fixation, as well as the oxidative fragmentation of the pentose substrate in the photorespiration process. Both reactions occur simultaneously and in competition at the same active site. The protein is Ribulose bisphosphate carboxylase large chain of Prochlorococcus marinus (strain MIT 9301).